The following is a 76-amino-acid chain: uncharacterized protein (76 aa).

This is an uncharacterized protein from Enterobacteria phage T4 (Bacteriophage T4).